Here is a 229-residue protein sequence, read N- to C-terminus: Large ribosomal subunit protein uL1 (229 aa).

Belongs to the universal ribosomal protein uL1 family. In terms of assembly, part of the 50S ribosomal subunit.

Its function is as follows. Binds directly to 23S rRNA. The L1 stalk is quite mobile in the ribosome, and is involved in E site tRNA release. Protein L1 is also a translational repressor protein, it controls the translation of the L11 operon by binding to its mRNA. The protein is Large ribosomal subunit protein uL1 of Pediococcus pentosaceus (strain ATCC 25745 / CCUG 21536 / LMG 10740 / 183-1w).